The following is a 311-amino-acid chain: Probable manganese-dependent inorganic pyrophosphatase (311 aa).

Mn(2+) contacts are provided by His9, Asp13, Asp15, Asp77, His99, and Asp151.

The protein belongs to the PPase class C family. The cofactor is Mn(2+).

It localises to the cytoplasm. It catalyses the reaction diphosphate + H2O = 2 phosphate + H(+). The polypeptide is Probable manganese-dependent inorganic pyrophosphatase (Streptococcus equi subsp. zooepidemicus (strain MGCS10565)).